We begin with the raw amino-acid sequence, 488 residues long: MALHQSNIIINILLVSAFLLNLVFAFIIIFMERRTANSIWAWLLVLVFLPLVGFILYLLLGRQIQREHIFKLAKEDKVGLEMIVDEQLEALKKQDFSKGNHQIVKFKEMVQMLLYNNAAFLTTDNDLTIYTDGHQKFDDLINDIRHAQSYIHIQYYIIHSDNLGKQLLHELEKKAEEGIEVKMLYDDMGSRDLRKKDLKKFRQKGGHAESFFPSKLPLINLRMNNRNHRKIVVIDGTIGYVGGFNVGDEYIGKSKKFGYWRDTHLRIKGDAVNALQLRFILDWNSQSTRDNLTYESRYFPDVDSGGTIGIQIASSGPDEDWEQIKYGYLKMISSAKESIYIQSPYFIPDQAFLDSIKIAALGGVDVNIMVPNKRDHPFVYWATLKNVASLLEAGVNVYHYDNGFLHSKTLVIDDEVASVGTANMDNRSFTLNFEVNAFIYDEGVARSLKQAFINDMKLSNKLTSEEYAKRNLLVKFKEGISQLLSPIL.

The next 2 membrane-spanning stretches (helical) occupy residues 8–28 (IIINILLVSAFLLNLVFAFII) and 39–59 (IWAWLLVLVFLPLVGFILYLL). 2 consecutive PLD phosphodiesterase domains span residues 223–250 (MNNRNHRKIVVIDGTIGYVGGFNVGDEY) and 401–428 (DNGFLHSKTLVIDDEVASVGTANMDNRS). Residues H228, K230, D235, H406, K408, and D413 contribute to the active site.

It belongs to the phospholipase D family. Cardiolipin synthase subfamily.

It localises to the cell membrane. The catalysed reaction is 2 a 1,2-diacyl-sn-glycero-3-phospho-(1'-sn-glycerol) = a cardiolipin + glycerol. In terms of biological role, catalyzes the reversible phosphatidyl group transfer from one phosphatidylglycerol molecule to another to form cardiolipin (CL) (diphosphatidylglycerol) and glycerol. This chain is Cardiolipin synthase 2 (cls2), found in Staphylococcus epidermidis (strain ATCC 35984 / DSM 28319 / BCRC 17069 / CCUG 31568 / BM 3577 / RP62A).